Consider the following 131-residue polypeptide: Small ribosomal subunit protein bS6 (131 aa).

The residue at position 93 (Lys93) is an N6-acetyllysine. A disordered region spans residues Glu98–Glu131. Basic and acidic residues predominate over residues Lys104–Phe116. Positions Thr120–Glu131 are enriched in acidic residues.

This sequence belongs to the bacterial ribosomal protein bS6 family.

In terms of biological role, binds together with bS18 to 16S ribosomal RNA. This Escherichia fergusonii (strain ATCC 35469 / DSM 13698 / CCUG 18766 / IAM 14443 / JCM 21226 / LMG 7866 / NBRC 102419 / NCTC 12128 / CDC 0568-73) protein is Small ribosomal subunit protein bS6.